The primary structure comprises 362 residues: MNTFGTRLKFTSFGESHGVAVGCIIDGMPAGVKFDEEFLQNELDKRKGGSKFATPRKESDKAQVLSGVFEGYTTGHPIAIVVFNENAHSKDYDNLKDLFRPAHADFTYFYKYGIRDHRGGGRSSARESVARVAGGAVAAMLLCEFGICVQSGVFGIGTFVSNLKEEEFDFEFAKKSEIFCLDPKLESDFKNEILNARNSKDSVGAAVFTKVSGMLVGLGEVLYDKLDSKLAHALMGVNAVKAVEIGEGINASKMRGSCNNDALKDGKFLSNHSGGILGGISNGENLILKTYFKPTPSIFAKQESIDKFGNNLEFELKGRHDPCVGVRGSVVANAMVRLVLADCLLLNASANLNNLKNAYGLK.

Position 46 (Arg46) interacts with NADP(+). FMN-binding positions include 122 to 124 (RSS), 238 to 239 (NA), Gly278, 293 to 297 (KPTPS), and Arg319.

The protein belongs to the chorismate synthase family. In terms of assembly, homotetramer. Requires FMNH2 as cofactor.

The enzyme catalyses 5-O-(1-carboxyvinyl)-3-phosphoshikimate = chorismate + phosphate. It participates in metabolic intermediate biosynthesis; chorismate biosynthesis; chorismate from D-erythrose 4-phosphate and phosphoenolpyruvate: step 7/7. Functionally, catalyzes the anti-1,4-elimination of the C-3 phosphate and the C-6 proR hydrogen from 5-enolpyruvylshikimate-3-phosphate (EPSP) to yield chorismate, which is the branch point compound that serves as the starting substrate for the three terminal pathways of aromatic amino acid biosynthesis. This reaction introduces a second double bond into the aromatic ring system. This chain is Chorismate synthase, found in Campylobacter jejuni subsp. jejuni serotype O:23/36 (strain 81-176).